The sequence spans 480 residues: Protein nucleotidyltransferase YdiU (480 aa).

ATP is bound by residues Gly-86, Gly-88, Arg-89, Lys-109, Asp-121, Gly-122, Arg-172, and Arg-179. The active-site Proton acceptor is the Asp-248. Residues Asn-249 and Asp-258 each coordinate Mg(2+). Asp-258 lines the ATP pocket.

The protein belongs to the SELO family. It depends on Mg(2+) as a cofactor. Mn(2+) is required as a cofactor.

It catalyses the reaction L-seryl-[protein] + ATP = 3-O-(5'-adenylyl)-L-seryl-[protein] + diphosphate. The catalysed reaction is L-threonyl-[protein] + ATP = 3-O-(5'-adenylyl)-L-threonyl-[protein] + diphosphate. The enzyme catalyses L-tyrosyl-[protein] + ATP = O-(5'-adenylyl)-L-tyrosyl-[protein] + diphosphate. It carries out the reaction L-histidyl-[protein] + UTP = N(tele)-(5'-uridylyl)-L-histidyl-[protein] + diphosphate. It catalyses the reaction L-seryl-[protein] + UTP = O-(5'-uridylyl)-L-seryl-[protein] + diphosphate. The catalysed reaction is L-tyrosyl-[protein] + UTP = O-(5'-uridylyl)-L-tyrosyl-[protein] + diphosphate. Functionally, nucleotidyltransferase involved in the post-translational modification of proteins. It can catalyze the addition of adenosine monophosphate (AMP) or uridine monophosphate (UMP) to a protein, resulting in modifications known as AMPylation and UMPylation. The polypeptide is Protein nucleotidyltransferase YdiU (Salmonella paratyphi A (strain ATCC 9150 / SARB42)).